Consider the following 185-residue polypeptide: Crossover junction endodeoxyribonuclease RuvC (185 aa).

Catalysis depends on residues aspartate 7, glutamate 66, and aspartate 137. Mg(2+) is bound by residues aspartate 7, glutamate 66, and aspartate 137.

The protein belongs to the RuvC family. As to quaternary structure, homodimer which binds Holliday junction (HJ) DNA. The HJ becomes 2-fold symmetrical on binding to RuvC with unstacked arms; it has a different conformation from HJ DNA in complex with RuvA. In the full resolvosome a probable DNA-RuvA(4)-RuvB(12)-RuvC(2) complex forms which resolves the HJ. It depends on Mg(2+) as a cofactor.

The protein localises to the cytoplasm. It catalyses the reaction Endonucleolytic cleavage at a junction such as a reciprocal single-stranded crossover between two homologous DNA duplexes (Holliday junction).. Functionally, the RuvA-RuvB-RuvC complex processes Holliday junction (HJ) DNA during genetic recombination and DNA repair. Endonuclease that resolves HJ intermediates. Cleaves cruciform DNA by making single-stranded nicks across the HJ at symmetrical positions within the homologous arms, yielding a 5'-phosphate and a 3'-hydroxyl group; requires a central core of homology in the junction. The consensus cleavage sequence is 5'-(A/T)TT(C/G)-3'. Cleavage occurs on the 3'-side of the TT dinucleotide at the point of strand exchange. HJ branch migration catalyzed by RuvA-RuvB allows RuvC to scan DNA until it finds its consensus sequence, where it cleaves and resolves the cruciform DNA. This Anaeromyxobacter sp. (strain K) protein is Crossover junction endodeoxyribonuclease RuvC.